A 249-amino-acid chain; its full sequence is tRNA (guanine-N(1)-)-methyltransferase (249 aa).

Residues Gly118 and 138–143 (IGDYVL) each bind S-adenosyl-L-methionine.

This sequence belongs to the RNA methyltransferase TrmD family. Homodimer.

The protein localises to the cytoplasm. It carries out the reaction guanosine(37) in tRNA + S-adenosyl-L-methionine = N(1)-methylguanosine(37) in tRNA + S-adenosyl-L-homocysteine + H(+). In terms of biological role, specifically methylates guanosine-37 in various tRNAs. The protein is tRNA (guanine-N(1)-)-methyltransferase of Alkaliphilus oremlandii (strain OhILAs) (Clostridium oremlandii (strain OhILAs)).